The following is a 393-amino-acid chain: Homeobox protein knotted-1-like 4 (393 aa).

Residues 1–13 (MAFHNNHFNHFTD) show a composition bias toward polar residues. Disordered regions lie at residues 1 to 39 (MAFHNNHFNHFTDQQQHQPPPPPQQQQQQHFQESAPPNW) and 81 to 114 (QRGNTANNNNNETSGDVIEDVPGGEESMIGEKKE). An ELK domain is found at 286–306 (ELKHELKQGYKEKIVDIREEI). The homeobox; TALE-type DNA-binding region spans 307-370 (LRKRRAGKLP…NQRKRNWHSN (64 aa)). Residues 363–393 (RKRNWHSNPSSSTVSKNKRRSNAGENSGRDR) are disordered. Positions 368–377 (HSNPSSSTVS) are enriched in polar residues.

Belongs to the TALE/KNOX homeobox family. In terms of assembly, may form heterodimeric complex with the TALE/BELL proteins. Interacts with OFP1, OFP2, OFP4 and OFP12. Interacts with KNATM-B.

It is found in the nucleus. This chain is Homeobox protein knotted-1-like 4 (KNAT4), found in Arabidopsis thaliana (Mouse-ear cress).